The primary structure comprises 105 residues: Large ribosomal subunit protein uL24 (105 aa).

It belongs to the universal ribosomal protein uL24 family. As to quaternary structure, part of the 50S ribosomal subunit.

Functionally, one of two assembly initiator proteins, it binds directly to the 5'-end of the 23S rRNA, where it nucleates assembly of the 50S subunit. Its function is as follows. One of the proteins that surrounds the polypeptide exit tunnel on the outside of the subunit. The polypeptide is Large ribosomal subunit protein uL24 (Xanthomonas axonopodis pv. citri (strain 306)).